We begin with the raw amino-acid sequence, 439 residues long: Ribosomal protein uS12 methylthiotransferase RimO (439 aa).

One can recognise an MTTase N-terminal domain in the interval 7 to 119 (KQLCLISLGC…IDIMIAKKQN (113 aa)). The [4Fe-4S] cluster site is built by C16, C50, C82, C151, C155, and C158. One can recognise a Radical SAM core domain in the interval 137 to 368 (TGSSVHAYVK…ALKHQNHSFK (232 aa)).

The protein belongs to the methylthiotransferase family. RimO subfamily. [4Fe-4S] cluster serves as cofactor.

It localises to the cytoplasm. It carries out the reaction L-aspartate(89)-[ribosomal protein uS12]-hydrogen + (sulfur carrier)-SH + AH2 + 2 S-adenosyl-L-methionine = 3-methylsulfanyl-L-aspartate(89)-[ribosomal protein uS12]-hydrogen + (sulfur carrier)-H + 5'-deoxyadenosine + L-methionine + A + S-adenosyl-L-homocysteine + 2 H(+). In terms of biological role, catalyzes the methylthiolation of an aspartic acid residue of ribosomal protein uS12. The protein is Ribosomal protein uS12 methylthiotransferase RimO of Helicobacter pylori (strain ATCC 700392 / 26695) (Campylobacter pylori).